Here is a 540-residue protein sequence, read N- to C-terminus: Glucose-6-phosphate isomerase (540 aa).

The active-site Proton donor is Glu350. Residues His381 and Lys503 contribute to the active site.

It belongs to the GPI family.

The protein localises to the cytoplasm. The catalysed reaction is alpha-D-glucose 6-phosphate = beta-D-fructose 6-phosphate. The protein operates within carbohydrate biosynthesis; gluconeogenesis. It participates in carbohydrate degradation; glycolysis; D-glyceraldehyde 3-phosphate and glycerone phosphate from D-glucose: step 2/4. Functionally, catalyzes the reversible isomerization of glucose-6-phosphate to fructose-6-phosphate. In Paraburkholderia xenovorans (strain LB400), this protein is Glucose-6-phosphate isomerase.